The sequence spans 417 residues: Pre-mRNA-splicing factor RBM22 (417 aa).

A C3H1-type zinc finger spans residues 159-186 (RNRPHICSFWVKGECKRGEECPYRHEKP). Residues 232-305 (TTLYVGGLGD…RRLNVKWGRS (74 aa)) enclose the RRM domain. Disordered regions lie at residues 303 to 348 (GRSQ…SANY) and 369 to 417 (GLSG…PSSG). The segment covering 309–318 (RGKEREHDGS) has biased composition (basic and acidic residues). The span at 369-391 (GLSGPPPGFGPHMFPPMAPPPFL) shows a compositional bias: pro residues.

It belongs to the SLT11 family. As to quaternary structure, component of the pre-catalytic and catalytic spliceosome complexes. Component of the postcatalytic spliceosome P complex.

Its subcellular location is the nucleus. It localises to the cytoplasm. Its function is as follows. Required for pre-mRNA splicing as component of the activated spliceosome. Involved in the first step of pre-mRNA splicing. Binds directly to the internal stem-loop (ISL) domain of the U6 snRNA and to the pre-mRNA intron near the 5' splice site during the activation and catalytic phases of the spliceosome cycle. The chain is Pre-mRNA-splicing factor RBM22 (rbm22) from Xenopus laevis (African clawed frog).